A 196-amino-acid chain; its full sequence is Probable malonic semialdehyde reductase RutE (196 aa).

Belongs to the nitroreductase family. HadB/RutE subfamily. FMN serves as cofactor.

It carries out the reaction 3-hydroxypropanoate + NADP(+) = 3-oxopropanoate + NADPH + H(+). May reduce toxic product malonic semialdehyde to 3-hydroxypropionic acid, which is excreted. The protein is Probable malonic semialdehyde reductase RutE of Cronobacter sakazakii (strain ATCC BAA-894) (Enterobacter sakazakii).